The chain runs to 358 residues: Peptide chain release factor 1 (358 aa).

Residue glutamine 233 is modified to N5-methylglutamine.

The protein belongs to the prokaryotic/mitochondrial release factor family. In terms of processing, methylated by PrmC. Methylation increases the termination efficiency of RF1.

The protein localises to the cytoplasm. In terms of biological role, peptide chain release factor 1 directs the termination of translation in response to the peptide chain termination codons UAG and UAA. The polypeptide is Peptide chain release factor 1 (Staphylococcus saprophyticus subsp. saprophyticus (strain ATCC 15305 / DSM 20229 / NCIMB 8711 / NCTC 7292 / S-41)).